Reading from the N-terminus, the 454-residue chain is Replicative DNA helicase DnaB (454 aa).

Residues 1–149 (MSELFSERIP…LDEADRKIME (149 aa)) are N-terminal domain (NTD). Residues 163–176 (KDILVQTYDNIEML) are linker helix. The region spanning 179 to 445 (RDGEITGIPT…NKFVNLERRF (267 aa)) is the SF4 helicase domain. The interval 183-454 (ITGIPTGFTE…FDEAQIPPGA (272 aa)) is C-terminal domain (CTD). Residues Ser-213, Gly-215, Lys-216, Thr-217, and Ala-218 each contribute to the ATP site. Glu-241 functions as the Nucleophile in the catalytic mechanism. ATP contacts are provided by Arg-250 and Gln-362. 3 residues coordinate ssDNA: Arg-381, Glu-382, and Gly-384. ATP-binding residues include Lys-418, Gln-419, and Arg-420.

It belongs to the helicase family. DnaB subfamily. As to quaternary structure, homohexamer. Interacts with DnaG primase, as DnaB(6):DnaG(3). Interacts with the N-terminus of DnaI (shown with DnaI of B.subtilis), forms a helicase DnaB(6):DnaI(6) complex. The DnaB-DnaI complex is disrupted by DnaD (DnaD and DnaI from B.subtilis). A stable complex DnaI(6):DnaB(6):DnaG(3) fragment can be isolated; DnaI and DnaG do not contact each other (DnaI in this complex is derived from B.subtilis). Forms a complex with DNA clamp loader protein tau (shown with B.subtilis HolA) tau(3):DnaB(6); a single ATP hydrolysis even is sufficient for complex formation.

The enzyme catalyses Couples ATP hydrolysis with the unwinding of duplex DNA at the replication fork by translocating in the 5'-3' direction. This creates two antiparallel DNA single strands (ssDNA). The leading ssDNA polymer is the template for DNA polymerase III holoenzyme which synthesizes a continuous strand.. It catalyses the reaction ATP + H2O = ADP + phosphate + H(+). Functionally, the main replicative DNA helicase, it participates in initiation and elongation during chromosome replication. Travels ahead of the DNA replisome, separating double-stranded (ds)DNA into templates for DNA synthesis. Binding of single-stranded (ss)DNA to the hexamer suggests a 2-nucleotide step size for the helicase and a hand-over-hand mechanism of DNA unwinding. Has ssDNA-stimulated ATPase activity. DnaG primase stimulates the helicase activity (the helicase direction was not determine but is probably 5'-3'). Loaded onto DNA by helicase loader DnaI (shown with DnaI of B.subtilis); ATP-binding enhances loading and subsequent ATP hydrolysis dissociates the complex, leaving helicase on the DNA. Binds ssDNA and less well dsDNA, in the presence of ADPNP (probably 5'-adenylyl beta, gamma-imidodiphosphate, but not ATP) binding to both DNAs is improved. The protein is Replicative DNA helicase DnaB of Geobacillus stearothermophilus (Bacillus stearothermophilus).